The following is a 226-amino-acid chain: ATP synthase F(0) complex subunit a (226 aa).

Transmembrane regions (helical) follow at residues 11 to 31 (SPEL…VLLI), 37 to 54 (LLGN…MTIM), 72 to 92 (LTSL…PYTF), 98 to 118 (LSMN…TGMT), 138 to 158 (IPFM…ALGV), 178 to 198 (TLNF…LLFL), and 199 to 219 (LCIL…LLII).

This sequence belongs to the ATPase A chain family. In terms of assembly, component of the ATP synthase complex composed at least of ATP5F1A/subunit alpha, ATP5F1B/subunit beta, ATP5MC1/subunit c (homooctomer), MT-ATP6/subunit a, MT-ATP8/subunit 8, ATP5ME/subunit e, ATP5MF/subunit f, ATP5MG/subunit g, ATP5MK/subunit k, ATP5MJ/subunit j, ATP5F1C/subunit gamma, ATP5F1D/subunit delta, ATP5F1E/subunit epsilon, ATP5PF/subunit F6, ATP5PB/subunit b, ATP5PD/subunit d, ATP5PO/subunit OSCP. ATP synthase complex consists of a soluble F(1) head domain (subunits alpha(3) and beta(3)) - the catalytic core - and a membrane F(0) domain - the membrane proton channel (subunits c, a, 8, e, f, g, k and j). These two domains are linked by a central stalk (subunits gamma, delta, and epsilon) rotating inside the F1 region and a stationary peripheral stalk (subunits F6, b, d, and OSCP). Interacts with DNAJC30; interaction is direct.

It localises to the mitochondrion inner membrane. The catalysed reaction is H(+)(in) = H(+)(out). Functionally, subunit a, of the mitochondrial membrane ATP synthase complex (F(1)F(0) ATP synthase or Complex V) that produces ATP from ADP in the presence of a proton gradient across the membrane which is generated by electron transport complexes of the respiratory chain. ATP synthase complex consist of a soluble F(1) head domain - the catalytic core - and a membrane F(1) domain - the membrane proton channel. These two domains are linked by a central stalk rotating inside the F(1) region and a stationary peripheral stalk. During catalysis, ATP synthesis in the catalytic domain of F(1) is coupled via a rotary mechanism of the central stalk subunits to proton translocation. With the subunit c (ATP5MC1), forms the proton-conducting channel in the F(0) domain, that contains two crucial half-channels (inlet and outlet) that facilitate proton movement from the mitochondrial intermembrane space (IMS) into the matrix. Protons are taken up via the inlet half-channel and released through the outlet half-channel, following a Grotthuss mechanism. This is ATP synthase F(0) complex subunit a from Lycodon semicarinatus (Ryukyu odd-tooth snake).